The following is a 394-amino-acid chain: MSKEKFERNKPHVNVGTIGHVDHGKTTLTAAITNVLAKHFGGKAFAFDQIDKAPEERERGITINTSHVEYDTATRHYAHVDCPGHADYVKNMITGAAQMDGAILVVAATDGPMPQTREHILLGRQVGVPYIIVFMNKCDMVDDEELLELVEMEVRELLSEYDFPGDDLPVVRGSALKALEGEAQWEEKILELAGHLDTYIPEPERAIDLPFLMPIEDVFSIAGRGTVVTGRVERGIVKVGEEVEIVGIKDTTKTTCTGVEMFRKLLDEGRAGENIGALLRGVKREDVERGQVLAKPGTIKPHTKFESEVYVLSKEEGGRHTPFFKGYRPQFYFRTTDVTGTIELPEGVEMVMPGDNIKMVVTLIAPIAMDDGLRFAIREGGRTVGAGVVAKVIA.

Residues 10–204 enclose the tr-type G domain; the sequence is KPHVNVGTIG…HLDTYIPEPE (195 aa). Residues 19 to 26 are G1; sequence GHVDHGKT. Residue 19 to 26 coordinates GTP; sequence GHVDHGKT. Mg(2+) is bound at residue Thr26. Positions 60-64 are G2; that stretch reads GITIN. Positions 81-84 are G3; that stretch reads DCPG. GTP contacts are provided by residues 81–85 and 136–139; these read DCPGH and NKCD. The tract at residues 136 to 139 is G4; sequence NKCD. The tract at residues 174–176 is G5; sequence SAL.

This sequence belongs to the TRAFAC class translation factor GTPase superfamily. Classic translation factor GTPase family. EF-Tu/EF-1A subfamily. In terms of assembly, monomer.

The protein localises to the cytoplasm. It carries out the reaction GTP + H2O = GDP + phosphate + H(+). GTP hydrolase that promotes the GTP-dependent binding of aminoacyl-tRNA to the A-site of ribosomes during protein biosynthesis. The sequence is that of Elongation factor Tu from Aeromonas hydrophila subsp. hydrophila (strain ATCC 7966 / DSM 30187 / BCRC 13018 / CCUG 14551 / JCM 1027 / KCTC 2358 / NCIMB 9240 / NCTC 8049).